Here is a 398-residue protein sequence, read N- to C-terminus: Minor capsid protein (398 aa).

The interval 359 to 398 (EEASVTSTEETLTPAQEAARTRAANKARKEAELAAATAEQ) is disordered. Residues 362 to 372 (SVTSTEETLTP) are compositionally biased toward polar residues. The span at 373-382 (AQEAARTRAA) shows a compositional bias: low complexity.

It belongs to the T7virus minor capsid protein family. Interacts with the connector protein and the major capsid protein.

The protein localises to the virion. In terms of biological role, assembles with the major capsid protein to form an icosahedral capsid with a T=7 symmetry, about 60 nm in diameter, and consisting of 415 capsid proteins. The major and minor capsid proteins are incorporated into the capsid in about a 90/10 ratio respectively. Once the capsid formed, encapsidates one single copy of the viral genome. The protein is Minor capsid protein of Escherichia coli (Bacteriophage T7).